Reading from the N-terminus, the 101-residue chain is NADH-quinone oxidoreductase subunit K (101 aa).

Helical transmembrane passes span 4-24 (LEHY…GLFL), 30-50 (IVLL…LVAF), and 65-85 (FVLT…VCFF).

Belongs to the complex I subunit 4L family. In terms of assembly, NDH-1 is composed of 14 different subunits. Subunits NuoA, H, J, K, L, M, N constitute the membrane sector of the complex.

Its subcellular location is the cell inner membrane. It carries out the reaction a quinone + NADH + 5 H(+)(in) = a quinol + NAD(+) + 4 H(+)(out). NDH-1 shuttles electrons from NADH, via FMN and iron-sulfur (Fe-S) centers, to quinones in the respiratory chain. The immediate electron acceptor for the enzyme in this species is believed to be ubiquinone. Couples the redox reaction to proton translocation (for every two electrons transferred, four hydrogen ions are translocated across the cytoplasmic membrane), and thus conserves the redox energy in a proton gradient. In Ruegeria pomeroyi (strain ATCC 700808 / DSM 15171 / DSS-3) (Silicibacter pomeroyi), this protein is NADH-quinone oxidoreductase subunit K.